The sequence spans 258 residues: Imidazole glycerol phosphate synthase subunit HisF (258 aa).

Catalysis depends on residues D11 and D130.

Belongs to the HisA/HisF family. Heterodimer of HisH and HisF.

It localises to the cytoplasm. It catalyses the reaction 5-[(5-phospho-1-deoxy-D-ribulos-1-ylimino)methylamino]-1-(5-phospho-beta-D-ribosyl)imidazole-4-carboxamide + L-glutamine = D-erythro-1-(imidazol-4-yl)glycerol 3-phosphate + 5-amino-1-(5-phospho-beta-D-ribosyl)imidazole-4-carboxamide + L-glutamate + H(+). It functions in the pathway amino-acid biosynthesis; L-histidine biosynthesis; L-histidine from 5-phospho-alpha-D-ribose 1-diphosphate: step 5/9. IGPS catalyzes the conversion of PRFAR and glutamine to IGP, AICAR and glutamate. The HisF subunit catalyzes the cyclization activity that produces IGP and AICAR from PRFAR using the ammonia provided by the HisH subunit. The chain is Imidazole glycerol phosphate synthase subunit HisF from Prochlorococcus marinus (strain MIT 9211).